A 636-amino-acid chain; its full sequence is Chaperone protein DnaK (636 aa).

Thr-197 is subject to Phosphothreonine; by autocatalysis. Positions 596-607 are enriched in low complexity; sequence LYQQAQEQQQSG. The interval 596-636 is disordered; it reads LYQQAQEQQQSGSSGGSSDEDVVEDAEIVDEEDEEKRDDNR. Positions 613–636 are enriched in acidic residues; sequence SDEDVVEDAEIVDEEDEEKRDDNR.

It belongs to the heat shock protein 70 family.

Its function is as follows. Acts as a chaperone. This Rubrobacter xylanophilus (strain DSM 9941 / JCM 11954 / NBRC 16129 / PRD-1) protein is Chaperone protein DnaK.